A 1073-amino-acid chain; its full sequence is Carbamoyl phosphate synthase large chain (1073 aa).

The tract at residues 1–403 (MPKRTDIKSI…SLQKALRGLE (403 aa)) is carboxyphosphate synthetic domain. The ATP site is built by R129, R169, G175, G176, E208, L210, E215, G241, V242, H243, Q285, and E299. An ATP-grasp 1 domain is found at 133-328 (DKAMKDIGLE…IAKIAAKLAI (196 aa)). Mg(2+) is bound by residues Q285, E299, and N301. Mn(2+) contacts are provided by Q285, E299, and N301. Positions 404–553 (VGACGLDPKV…YSTYEEECEA (150 aa)) are oligomerization domain. The segment at 554–935 (NPSTRDKIMI…AFAKAQMGAS (382 aa)) is carbamoyl phosphate synthetic domain. The ATP-grasp 2 domain maps to 678-869 (QQMVQRLSLL…LAMIAARVMA (192 aa)). Residues R714, H753, L755, E760, G785, V786, H787, S788, Q828, and E840 each coordinate ATP. Positions 828, 840, and 842 each coordinate Mg(2+). Mn(2+)-binding residues include Q828, E840, and N842. The MGS-like domain maps to 936 to 1073 (EVLPTGGTAF…LQDLHAGLKA (138 aa)). Positions 936–1073 (EVLPTGGTAF…LQDLHAGLKA (138 aa)) are allosteric domain.

Belongs to the CarB family. As to quaternary structure, composed of two chains; the small (or glutamine) chain promotes the hydrolysis of glutamine to ammonia, which is used by the large (or ammonia) chain to synthesize carbamoyl phosphate. Tetramer of heterodimers (alpha,beta)4. Mg(2+) serves as cofactor. The cofactor is Mn(2+).

It carries out the reaction hydrogencarbonate + L-glutamine + 2 ATP + H2O = carbamoyl phosphate + L-glutamate + 2 ADP + phosphate + 2 H(+). The enzyme catalyses hydrogencarbonate + NH4(+) + 2 ATP = carbamoyl phosphate + 2 ADP + phosphate + 2 H(+). The protein operates within amino-acid biosynthesis; L-arginine biosynthesis; carbamoyl phosphate from bicarbonate: step 1/1. Its pathway is pyrimidine metabolism; UMP biosynthesis via de novo pathway; (S)-dihydroorotate from bicarbonate: step 1/3. In terms of biological role, large subunit of the glutamine-dependent carbamoyl phosphate synthetase (CPSase). CPSase catalyzes the formation of carbamoyl phosphate from the ammonia moiety of glutamine, carbonate, and phosphate donated by ATP, constituting the first step of 2 biosynthetic pathways, one leading to arginine and/or urea and the other to pyrimidine nucleotides. The large subunit (synthetase) binds the substrates ammonia (free or transferred from glutamine from the small subunit), hydrogencarbonate and ATP and carries out an ATP-coupled ligase reaction, activating hydrogencarbonate by forming carboxy phosphate which reacts with ammonia to form carbamoyl phosphate. The chain is Carbamoyl phosphate synthase large chain from Pseudomonas putida (strain ATCC 47054 / DSM 6125 / CFBP 8728 / NCIMB 11950 / KT2440).